The sequence spans 336 residues: Holliday junction branch migration complex subunit RuvB (336 aa).

The large ATPase domain (RuvB-L) stretch occupies residues 1 to 184 (MYDEERIVSG…FGIVGHMEYY (184 aa)). ATP-binding positions include Leu-23, Arg-24, Gly-65, Lys-68, Thr-69, Thr-70, 131 to 133 (EDY), Arg-174, Tyr-184, and Arg-221. Residue Thr-69 coordinates Mg(2+). The tract at residues 185–255 (NEVDLSQIIK…IVQFALDLLR (71 aa)) is small ATPAse domain (RuvB-S). The head domain (RuvB-H) stretch occupies residues 258–336 (KVGLDRTDRK…HLGIKYNKEG (79 aa)). DNA-binding residues include Arg-313 and Arg-318.

Belongs to the RuvB family. In terms of assembly, homohexamer. Forms an RuvA(8)-RuvB(12)-Holliday junction (HJ) complex. HJ DNA is sandwiched between 2 RuvA tetramers; dsDNA enters through RuvA and exits via RuvB. An RuvB hexamer assembles on each DNA strand where it exits the tetramer. Each RuvB hexamer is contacted by two RuvA subunits (via domain III) on 2 adjacent RuvB subunits; this complex drives branch migration. In the full resolvosome a probable DNA-RuvA(4)-RuvB(12)-RuvC(2) complex forms which resolves the HJ.

Its subcellular location is the cytoplasm. It catalyses the reaction ATP + H2O = ADP + phosphate + H(+). The RuvA-RuvB-RuvC complex processes Holliday junction (HJ) DNA during genetic recombination and DNA repair, while the RuvA-RuvB complex plays an important role in the rescue of blocked DNA replication forks via replication fork reversal (RFR). RuvA specifically binds to HJ cruciform DNA, conferring on it an open structure. The RuvB hexamer acts as an ATP-dependent pump, pulling dsDNA into and through the RuvAB complex. RuvB forms 2 homohexamers on either side of HJ DNA bound by 1 or 2 RuvA tetramers; 4 subunits per hexamer contact DNA at a time. Coordinated motions by a converter formed by DNA-disengaged RuvB subunits stimulates ATP hydrolysis and nucleotide exchange. Immobilization of the converter enables RuvB to convert the ATP-contained energy into a lever motion, pulling 2 nucleotides of DNA out of the RuvA tetramer per ATP hydrolyzed, thus driving DNA branch migration. The RuvB motors rotate together with the DNA substrate, which together with the progressing nucleotide cycle form the mechanistic basis for DNA recombination by continuous HJ branch migration. Branch migration allows RuvC to scan DNA until it finds its consensus sequence, where it cleaves and resolves cruciform DNA. The protein is Holliday junction branch migration complex subunit RuvB of Ligilactobacillus salivarius (strain UCC118) (Lactobacillus salivarius).